Consider the following 1392-residue polypeptide: Protein dispatched homolog 3 (1392 aa).

The Cytoplasmic segment spans residues 1–73; that stretch reads MDTEDDPLLQ…LGWAFTNPCC (73 aa). The tract at residues 16–40 is disordered; that stretch reads EEQEEEEATGETFLGAQKPGPQPGA. Residues 74 to 94 traverse the membrane as a helical segment; the sequence is AGLVLFLGCSIPMALSAFMFL. The Lumenal segment spans residues 95–462; that stretch reads YYPPLDIDIS…YEVRRTFNND (368 aa). The segment at 162-248 is disordered; sequence GNRSRQASRA…HAAVAANQSR (87 aa). A glycan (N-linked (GlcNAc...) asparagine) is linked at Asn-163. The span at 190–199 shows a compositional bias: polar residues; it reads SAAQKPTANR. The 159-residue stretch at 457–615 folds into the SSD domain; it reads RTFNNDMLLA…LVTMPAALGL (159 aa). Residues 463-483 traverse the membrane as a helical segment; sequence MLLAFISSSCIAALVYILTSC. Position 484 (Ser-484) is a topological domain, cytoplasmic. The helical transmembrane segment at 485-505 threads the bilayer; sequence VFLSFFGIASIGLSCLVALFL. Over 506–508 the chain is Lumenal; the sequence is YHV. Residues 509–529 form a helical membrane-spanning segment; it reads VFGIQYLGILNGVAAFVIVGI. Residues 530–573 are Cytoplasmic-facing; the sequence is GVDDVFVFINTYRQATHLEDPQLRMIHTVQTAGKATFFTSLTTA. Residues 574-594 traverse the membrane as a helical segment; that stretch reads AAYAANVFSQIPAVHDFGLFM. Ser-595 is a topological domain (lumenal). A helical membrane pass occupies residues 596–616; it reads LIVSCCWLAVLVTMPAALGLW. Topologically, residues 617-729 are cytoplasmic; it reads SLYLAPLESS…WVLWSAVKSR (113 aa). Residues 730–750 traverse the membrane as a helical segment; sequence WVIVGLFVSILILSLVFASRL. Over 751–1182 the chain is Lumenal; it reads RPASRAPLLF…IFMEIVGVQS (432 aa). Residue Asn-1021 is glycosylated (N-linked (GlcNAc...) asparagine). Residues 1183-1203 form a helical membrane-spanning segment; sequence ALCGLVLSLLICVAAVAVFTT. A topological domain (cytoplasmic) is located at residue His-1204. Residues 1205 to 1225 traverse the membrane as a helical segment; the sequence is ILLLLPVLLSILGIVCLVVTI. The Lumenal portion of the chain corresponds to 1226-1291; that stretch reads MYWSGWEMGA…TLEAVRHVGV (66 aa). The chain crosses the membrane as a helical span at residues 1292–1312; it reads AIVSSALTTVIATVPLFFCII. The Cytoplasmic segment spans residues 1313 to 1320; that stretch reads APFAKFGK. Residues 1321-1341 form a helical membrane-spanning segment; that stretch reads IVALNTGVSILYTLTVSTALL. Over 1342-1358 the chain is Lumenal; that stretch reads GIMAPSSFTRTRTSFLK. Residues 1359–1379 form a helical membrane-spanning segment; that stretch reads ALGAVLLAGALGLGACLVLLQ. Over 1380–1392 the chain is Cytoplasmic; that stretch reads SGYKIPLPAGASL.

The protein belongs to the patched family. Expressed in brain and testis.

The protein resides in the endoplasmic reticulum membrane. It is found in the nucleus membrane. It localises to the cytoplasmic vesicle membrane. Functionally, plays a role in neuronal proliferation and differentiation. Plays a role in the accumulation of cellular cholesterol. Involved in intracellular lipid droplet formation. May contribute to cholesterol homeostasis in neuronal cells. The chain is Protein dispatched homolog 3 from Homo sapiens (Human).